The primary structure comprises 120 residues: NAD(P)H-quinone oxidoreductase subunit 3 (120 aa).

3 helical membrane-spanning segments follow: residues 6 to 26 (GYDAFLGFLLIAAAVPVLALV), 64 to 84 (MFALVFVIFDVETVFLYPWAV), and 89 to 109 (LGLLAFIEALIFIAILLVALA).

The protein belongs to the complex I subunit 3 family. In terms of assembly, NDH-1 can be composed of about 15 different subunits; different subcomplexes with different compositions have been identified which probably have different functions.

The protein localises to the cellular thylakoid membrane. It carries out the reaction a plastoquinone + NADH + (n+1) H(+)(in) = a plastoquinol + NAD(+) + n H(+)(out). The catalysed reaction is a plastoquinone + NADPH + (n+1) H(+)(in) = a plastoquinol + NADP(+) + n H(+)(out). NDH-1 shuttles electrons from an unknown electron donor, via FMN and iron-sulfur (Fe-S) centers, to quinones in the respiratory and/or the photosynthetic chain. The immediate electron acceptor for the enzyme in this species is believed to be plastoquinone. Couples the redox reaction to proton translocation, and thus conserves the redox energy in a proton gradient. Cyanobacterial NDH-1 also plays a role in inorganic carbon-concentration. The polypeptide is NAD(P)H-quinone oxidoreductase subunit 3 (Synechococcus sp. (strain CC9902)).